Reading from the N-terminus, the 421-residue chain is ATP-dependent RNA helicase RhlB (421 aa).

Positions 9–37 (QKFSDFALHPKVVEALEKKGFHNCTPIQA) match the Q motif motif. The Helicase ATP-binding domain maps to 40–219 (LPLTLAGRDV…FEQMNNAEYI (180 aa)). Residue 53–60 (AQTGTGKT) coordinates ATP. A DEAD box motif is present at residues 165–168 (DEAD). In terms of domain architecture, Helicase C-terminal spans 245–390 (RLLQTLIEEE…VSKYNPDALM (146 aa)). Residues 392 to 421 (DLPKPLRLTRPRTGNGPRRTGAPRNRRRSG) form a disordered region. Low complexity predominate over residues 402 to 414 (PRTGNGPRRTGAP).

This sequence belongs to the DEAD box helicase family. RhlB subfamily. Component of the RNA degradosome, which is a multiprotein complex involved in RNA processing and mRNA degradation.

It localises to the cytoplasm. The catalysed reaction is ATP + H2O = ADP + phosphate + H(+). In terms of biological role, DEAD-box RNA helicase involved in RNA degradation. Has RNA-dependent ATPase activity and unwinds double-stranded RNA. This is ATP-dependent RNA helicase RhlB from Escherichia fergusonii (strain ATCC 35469 / DSM 13698 / CCUG 18766 / IAM 14443 / JCM 21226 / LMG 7866 / NBRC 102419 / NCTC 12128 / CDC 0568-73).